The following is a 388-amino-acid chain: Dual-specificity RNA methyltransferase RlmN (388 aa).

Glu-109 acts as the Proton acceptor in catalysis. The 240-residue stretch at 115-354 (EEDRATLCVS…TIVRKTRGDD (240 aa)) folds into the Radical SAM core domain. Residues Cys-122 and Cys-359 are joined by a disulfide bond. [4Fe-4S] cluster contacts are provided by Cys-129, Cys-133, and Cys-136. S-adenosyl-L-methionine-binding positions include 183 to 184 (GE), Ser-215, 237 to 239 (SLH), and Asn-316. The active-site S-methylcysteine intermediate is the Cys-359.

The protein belongs to the radical SAM superfamily. RlmN family. [4Fe-4S] cluster is required as a cofactor.

It localises to the cytoplasm. It catalyses the reaction adenosine(2503) in 23S rRNA + 2 reduced [2Fe-2S]-[ferredoxin] + 2 S-adenosyl-L-methionine = 2-methyladenosine(2503) in 23S rRNA + 5'-deoxyadenosine + L-methionine + 2 oxidized [2Fe-2S]-[ferredoxin] + S-adenosyl-L-homocysteine. The catalysed reaction is adenosine(37) in tRNA + 2 reduced [2Fe-2S]-[ferredoxin] + 2 S-adenosyl-L-methionine = 2-methyladenosine(37) in tRNA + 5'-deoxyadenosine + L-methionine + 2 oxidized [2Fe-2S]-[ferredoxin] + S-adenosyl-L-homocysteine. Functionally, specifically methylates position 2 of adenine 2503 in 23S rRNA and position 2 of adenine 37 in tRNAs. m2A2503 modification seems to play a crucial role in the proofreading step occurring at the peptidyl transferase center and thus would serve to optimize ribosomal fidelity. In Klebsiella pneumoniae (strain 342), this protein is Dual-specificity RNA methyltransferase RlmN.